A 195-amino-acid polypeptide reads, in one-letter code: Fe/S biogenesis protein NfuA (195 aa).

[4Fe-4S] cluster-binding residues include Cys-152 and Cys-155.

This sequence belongs to the NfuA family. Homodimer. It depends on [4Fe-4S] cluster as a cofactor.

Functionally, involved in iron-sulfur cluster biogenesis. Binds a 4Fe-4S cluster, can transfer this cluster to apoproteins, and thereby intervenes in the maturation of Fe/S proteins. Could also act as a scaffold/chaperone for damaged Fe/S proteins. In Vibrio cholerae serotype O1 (strain ATCC 39315 / El Tor Inaba N16961), this protein is Fe/S biogenesis protein NfuA.